A 571-amino-acid polypeptide reads, in one-letter code: Acetolactate synthase large subunit (571 aa).

Glu51 lines the thiamine diphosphate pocket. FAD is bound by residues Arg153, 261–282, and 304–323; these read HGTYEANMAMHYSDVIFAIGVR and DIDPTSISKTVSADIPIVGD. Positions 394–474 are thiamine pyrophosphate binding; it reads QHQMFTALYY…VLILNLNNSS (81 aa). Residues Asp445 and Asn472 each contribute to the Mg(2+) site.

It belongs to the TPP enzyme family. As to quaternary structure, dimer of large and small chains. It depends on Mg(2+) as a cofactor. The cofactor is thiamine diphosphate.

The enzyme catalyses 2 pyruvate + H(+) = (2S)-2-acetolactate + CO2. It participates in amino-acid biosynthesis; L-isoleucine biosynthesis; L-isoleucine from 2-oxobutanoate: step 1/4. It functions in the pathway amino-acid biosynthesis; L-valine biosynthesis; L-valine from pyruvate: step 1/4. The polypeptide is Acetolactate synthase large subunit (ilvI) (Buchnera aphidicola subsp. Schizaphis graminum (strain Sg)).